Here is a 204-residue protein sequence, read N- to C-terminus: Cysteine-rich protein 3 (204 aa).

Residues 3 to 64 (WTCPRCQQPV…KPCYGALFGP (62 aa)) enclose the LIM zinc-binding 1 domain. The interval 88–107 (ISLSPSNFSPPRPRTGLSRA) is disordered. Residues 122–183 (SLCPGCGDPV…IPCYGYLFGP (62 aa)) form the LIM zinc-binding 2 domain.

In terms of tissue distribution, expressed specifically by the thymus.

The protein localises to the cytoplasm. The chain is Cysteine-rich protein 3 (Crip3) from Mus musculus (Mouse).